The chain runs to 192 residues: uncharacterized protein (192 aa).

The first 18 residues, 1-18 (MNSKFILKYFILAFFLVS), serve as a signal peptide directing secretion. The N-palmitoyl cysteine moiety is linked to residue cysteine 19. A lipid anchor (S-diacylglycerol cysteine) is attached at cysteine 19.

Its subcellular location is the cell membrane. This is an uncharacterized protein from Borreliella burgdorferi (strain ATCC 35210 / DSM 4680 / CIP 102532 / B31) (Borrelia burgdorferi).